Here is a 90-residue protein sequence, read N- to C-terminus: Small ribosomal subunit protein uS15c (90 aa).

It belongs to the universal ribosomal protein uS15 family. As to quaternary structure, part of the 30S ribosomal subunit.

It localises to the plastid. The protein resides in the chloroplast. The sequence is that of Small ribosomal subunit protein uS15c (rps15) from Lotus japonicus (Lotus corniculatus var. japonicus).